The following is a 431-amino-acid chain: Protein translocase subunit SecY (431 aa).

Over 1-17 the chain is Cytoplasmic; the sequence is MFKTISNFMRVSDIRNK. The chain crosses the membrane as a helical span at residues 18 to 38; that stretch reads IIFTLLMLIVFRIGAFIPVPY. Topologically, residues 39–66 are extracellular; that stretch reads VNAEALQAQSQMGVFDLLNTFGGGALYQ. A helical transmembrane segment spans residues 67–87; that stretch reads FSIFAMGITPYITASIIIQLL. Residues 88-115 lie on the Cytoplasmic side of the membrane; that stretch reads QMDVVPKFTEWSKQGEVGRRKLAQFTRY. A helical transmembrane segment spans residues 116-136; that stretch reads FTIVLGFIQALGMSYGFNNLA. Residues 137 to 145 lie on the Extracellular side of the membrane; it reads NGMLIEKSG. A helical transmembrane segment spans residues 146-166; that stretch reads VSTYLIIALVLTGGTAFLMWL. Residues 167-177 are Cytoplasmic-facing; it reads GEQITSHGVGN. Residues 178-198 form a helical membrane-spanning segment; it reads GISIIIFAGIVSSIPKTIGQI. At 199-213 the chain is on the extracellular side; it reads YETQFVGSNDQLFIH. A helical membrane pass occupies residues 214–234; the sequence is IVKVALLVIAILAVIVGVIFI. Residues 235 to 261 are Cytoplasmic-facing; sequence QQAVRKIAIQYAKGTGRSPAGGGQSTH. A helical transmembrane segment spans residues 262–282; that stretch reads LPLKVNPAGVIPVIFAVAFLI. Residues 283-308 are Extracellular-facing; it reads TPRTIASFFGTNDVTKWIQNNFDNTH. A helical transmembrane segment spans residues 309-329; that stretch reads PVGMAIYVALIIAFTYFYAFV. The Cytoplasmic portion of the chain corresponds to 330–368; the sequence is QVNPEQMADNLKKQGGYIPGVRPGKMTQDRITSILYRLT. Helical transmembrane passes span 369–389 and 390–410; these read FVGSIFLAVISILPIFFIQFA and GLPQSAQIGGTSLLIVVGVAL. Residues 411–431 are Cytoplasmic-facing; that stretch reads ETMKQLESQLVKRNYRGFMKN.

It belongs to the SecY/SEC61-alpha family. Component of the Sec protein translocase complex. Heterotrimer consisting of SecY, SecE and SecG subunits. The heterotrimers can form oligomers, although 1 heterotrimer is thought to be able to translocate proteins. Interacts with the ribosome. Interacts with SecDF, and other proteins may be involved. Interacts with SecA. Interacts with FloT.

It localises to the cell membrane. The protein localises to the membrane raft. The central subunit of the protein translocation channel SecYEG. Consists of two halves formed by TMs 1-5 and 6-10. These two domains form a lateral gate at the front which open onto the bilayer between TMs 2 and 7, and are clamped together by SecE at the back. The channel is closed by both a pore ring composed of hydrophobic SecY resides and a short helix (helix 2A) on the extracellular side of the membrane which forms a plug. The plug probably moves laterally to allow the channel to open. The ring and the pore may move independently. This is Protein translocase subunit SecY from Bacillus subtilis (strain 168).